A 116-amino-acid polypeptide reads, in one-letter code: Bacterial microcompartment shell protein CutR (116 aa).

Residues 10-108 enclose the BMC circularly permuted domain; the sequence is RIIQESVPGK…LEYFKNSLGF (99 aa).

This sequence belongs to the EutS/PduU family. Has been crystallized in 5 structures (all are mutated, 3 have an N-terminal His-tag), most are homohexameric with a central pore. In two the homohexamer lies flat with a beta-barrel on the flat face created by the protruding N termini of the six chains. In 2 others the hexamer is not flat but has a six-fold screw axis; the screw pitch is 33.8 or 41.9 Angstroms depending on the structure. Interacts with the BMC major shell protein.

It localises to the bacterial microcompartment. It functions in the pathway amine and polyamine metabolism; choline degradation. Functionally, a minor shell protein of the choline degradation-specific bacterial microcompartment (BMC). Proteins such as this one with circularly permuted BMC domains may play a key role in conferring heterogeneity and flexibility in this BMC. The protein is Bacterial microcompartment shell protein CutR of Streptococcus intermedius (strain ATCC 27335 / DSM 20573 / CCUG 32759 / CIP 103248 / JCM 12996 / LMG 17840 / NCTC 11324 / SK54 / 1877).